Here is a 353-residue protein sequence, read N- to C-terminus: Polyprenal reductase 2 (353 aa).

6 consecutive transmembrane segments (helical) span residues 11–31 (PLLC…ALPI), 78–98 (FMHF…AIWF), 175–195 (MHIV…LSLA), 234–254 (PLLK…WGSL), 291–308 (YLAE…SGAE), and 313–335 (WFLF…NWYL).

Belongs to the steroid 5-alpha reductase family. Polyprenal reductase subfamily.

It localises to the cell membrane. It carries out the reaction a di-trans,poly-cis-dolichal + NADP(+) = a di-trans,poly-cis-polyprenal + NADPH + H(+). Its pathway is protein modification; protein glycosylation. Its function is as follows. Plays a key role in early steps of protein N-linked glycosylation by being involved in the conversion of polyprenol into dolichol. Acts as a polyprenal reductase that mediates the reduction of polyprenal into dolichal in a NADP-dependent mechanism. Dolichols are required for the synthesis of dolichol-linked monosaccharides and the oligosaccharide precursor used for N-glycosylation. In Oryza sativa subsp. japonica (Rice), this protein is Polyprenal reductase 2.